A 182-amino-acid chain; its full sequence is Putative manganese efflux pump MntP (182 aa).

6 helical membrane passes run 6 to 26, 37 to 57, 71 to 91, 101 to 121, 131 to 151, and 162 to 182; these read LIPL…VSLG, ILYI…IGMV, HFAG…STIL, IGIS…SVGL, IITI…GLLI, and YGEI…LFPI.

Belongs to the MntP (TC 9.B.29) family.

It localises to the cell membrane. Probably functions as a manganese efflux pump. This Bacillus cereus (strain B4264) protein is Putative manganese efflux pump MntP.